The chain runs to 608 residues: Glutamine--fructose-6-phosphate aminotransferase [isomerizing] (608 aa).

Cys2 (nucleophile; for GATase activity) is an active-site residue. In terms of domain architecture, Glutamine amidotransferase type-2 spans 2–218 (CGICGIVGHQ…DGDWCELTPD (217 aa)). SIS domains are found at residues 284–423 (MPFD…ARGT) and 456–598 (MAAV…VDQP). Residue Lys603 is the For Fru-6P isomerization activity of the active site.

In terms of assembly, homodimer.

It is found in the cytoplasm. The enzyme catalyses D-fructose 6-phosphate + L-glutamine = D-glucosamine 6-phosphate + L-glutamate. Catalyzes the first step in hexosamine metabolism, converting fructose-6P into glucosamine-6P using glutamine as a nitrogen source. In Gluconobacter oxydans (strain 621H) (Gluconobacter suboxydans), this protein is Glutamine--fructose-6-phosphate aminotransferase [isomerizing].